We begin with the raw amino-acid sequence, 350 residues long: Flap endonuclease 1 (350 aa).

Residues 1–102 are N-domain; sequence MGVTALRELI…REIERRQKLK (102 aa). Mg(2+) is bound by residues Asp-31, Asp-84, Glu-156, Glu-158, Asp-177, Asp-179, and Asp-240. Residues 120-261 form an I-domain region; the sequence is EARKYAQMSA…TALRYVKSYG (142 aa). The interval 339–347 is interaction with PCNA; the sequence is KQSTLDMFF.

It belongs to the XPG/RAD2 endonuclease family. FEN1 subfamily. Interacts with PCNA. PCNA stimulates the nuclease activity without altering cleavage specificity. Requires Mg(2+) as cofactor.

In terms of biological role, structure-specific nuclease with 5'-flap endonuclease and 5'-3' exonuclease activities involved in DNA replication and repair. During DNA replication, cleaves the 5'-overhanging flap structure that is generated by displacement synthesis when DNA polymerase encounters the 5'-end of a downstream Okazaki fragment. Binds the unpaired 3'-DNA end and kinks the DNA to facilitate 5' cleavage specificity. Cleaves one nucleotide into the double-stranded DNA from the junction in flap DNA, leaving a nick for ligation. Also involved in the base excision repair (BER) pathway. Acts as a genome stabilization factor that prevents flaps from equilibrating into structures that lead to duplications and deletions. Also possesses 5'-3' exonuclease activity on nicked or gapped double-stranded DNA. The chain is Flap endonuclease 1 from Ignicoccus hospitalis (strain KIN4/I / DSM 18386 / JCM 14125).